A 542-amino-acid chain; its full sequence is CTP synthase (542 aa).

Positions 1–265 (MARYVFITGG…DDEVLAAFGI (265 aa)) are amidoligase domain. Ser-13 provides a ligand contact to CTP. Residue Ser-13 participates in UTP binding. ATP contacts are provided by residues 14 to 19 (SLGKGI) and Asp-71. Mg(2+) contacts are provided by Asp-71 and Glu-139. Residues 146–148 (DIE), 186–191 (KTKPTQ), and Lys-222 contribute to the CTP site. UTP contacts are provided by residues 186-191 (KTKPTQ) and Lys-222. The 251-residue stretch at 291–541 (TIAIVGKYTG…IEAATEQSRL (251 aa)) folds into the Glutamine amidotransferase type-1 domain. Gly-353 provides a ligand contact to L-glutamine. Residue Cys-380 is the Nucleophile; for glutamine hydrolysis of the active site. Residues 381–384 (FGMQ), Glu-404, and Arg-469 each bind L-glutamine. Active-site residues include His-514 and Glu-516.

Belongs to the CTP synthase family. In terms of assembly, homotetramer.

The catalysed reaction is UTP + L-glutamine + ATP + H2O = CTP + L-glutamate + ADP + phosphate + 2 H(+). The enzyme catalyses L-glutamine + H2O = L-glutamate + NH4(+). It catalyses the reaction UTP + NH4(+) + ATP = CTP + ADP + phosphate + 2 H(+). Its pathway is pyrimidine metabolism; CTP biosynthesis via de novo pathway; CTP from UDP: step 2/2. With respect to regulation, allosterically activated by GTP, when glutamine is the substrate; GTP has no effect on the reaction when ammonia is the substrate. The allosteric effector GTP functions by stabilizing the protein conformation that binds the tetrahedral intermediate(s) formed during glutamine hydrolysis. Inhibited by the product CTP, via allosteric rather than competitive inhibition. In terms of biological role, catalyzes the ATP-dependent amination of UTP to CTP with either L-glutamine or ammonia as the source of nitrogen. Regulates intracellular CTP levels through interactions with the four ribonucleotide triphosphates. This Rhizobium leguminosarum bv. trifolii (strain WSM2304) protein is CTP synthase.